The primary structure comprises 66 residues: DNA-directed RNA polymerase subunit omega (66 aa).

It belongs to the RNA polymerase subunit omega family. In terms of assembly, the RNAP catalytic core consists of 2 alpha, 1 beta, 1 beta' and 1 omega subunit. When a sigma factor is associated with the core the holoenzyme is formed, which can initiate transcription.

The catalysed reaction is RNA(n) + a ribonucleoside 5'-triphosphate = RNA(n+1) + diphosphate. Promotes RNA polymerase assembly. Latches the N- and C-terminal regions of the beta' subunit thereby facilitating its interaction with the beta and alpha subunits. In Bacillus licheniformis (strain ATCC 14580 / DSM 13 / JCM 2505 / CCUG 7422 / NBRC 12200 / NCIMB 9375 / NCTC 10341 / NRRL NRS-1264 / Gibson 46), this protein is DNA-directed RNA polymerase subunit omega.